Here is a 210-residue protein sequence, read N- to C-terminus: Large ribosomal subunit protein uL3 (210 aa).

The tract at residues 126-150 (VSATHGSHRNHRKPGSVGASSTPSR) is disordered.

Belongs to the universal ribosomal protein uL3 family. Part of the 50S ribosomal subunit. Forms a cluster with proteins L14 and L19.

In terms of biological role, one of the primary rRNA binding proteins, it binds directly near the 3'-end of the 23S rRNA, where it nucleates assembly of the 50S subunit. This Tropheryma whipplei (strain TW08/27) (Whipple's bacillus) protein is Large ribosomal subunit protein uL3.